A 287-amino-acid polypeptide reads, in one-letter code: MDLEVVVITGMSGSGKSVALHALEDAGYYCVDNLPPELLTSFVELEHAHHGHRVAVAMDVRSATALPLVPQQLAGLREQGVQVRQLFLDATNDVLVRRFSETRRRHPLSQAEMREGPRPLLHTMRLERELLAPLREQAHVIDTSTLRSSQLLSYVKDLLSVPPSRLTLVFQSFAFKRGISMDADYVFDVRMLPNPHYEPLLRALTGKDAPVIDYLRQQPEVALMLAHIGDFLDHWLDALAHNHRSYVTVAIGCTGGQHRSVYLVEQLAARFEGRWNTLRRHRELDGI.

Gly10 to Ser17 serves as a coordination point for ATP. A GTP-binding site is contributed by Asp59–Ser62.

Belongs to the RapZ-like family.

In terms of biological role, displays ATPase and GTPase activities. The protein is Nucleotide-binding protein Dtpsy_0831 of Acidovorax ebreus (strain TPSY) (Diaphorobacter sp. (strain TPSY)).